A 171-amino-acid chain; its full sequence is MLP-like protein 31 (171 aa).

This sequence belongs to the MLP family.

The polypeptide is MLP-like protein 31 (MLP31) (Arabidopsis thaliana (Mouse-ear cress)).